Here is a 304-residue protein sequence, read N- to C-terminus: Negative regulator of the PHO system (304 aa).

One can recognise a Protein kinase domain in the interval 7 to 297 (FKQLEKVGNG…AKDALNHPWF (291 aa)). ATP-binding positions include 13 to 21 (VGNGTYATV) and Lys-36. The active-site Proton acceptor is the Asp-133.

Belongs to the protein kinase superfamily. CMGC Ser/Thr protein kinase family. CDC2/CDKX subfamily. In terms of assembly, interacts with a number of cyclins.

The catalysed reaction is L-seryl-[protein] + ATP = O-phospho-L-seryl-[protein] + ADP + H(+). It carries out the reaction L-threonyl-[protein] + ATP = O-phospho-L-threonyl-[protein] + ADP + H(+). Functionally, when phosphate concentrations are high it phosphorylates the PHO4 transcription factor thus establishing repression. In Kluyveromyces lactis (strain ATCC 8585 / CBS 2359 / DSM 70799 / NBRC 1267 / NRRL Y-1140 / WM37) (Yeast), this protein is Negative regulator of the PHO system (PHO85).